The following is a 322-amino-acid chain: Cysteine protease yopT1 (322 aa).

Catalysis depends on residues Cys139, His258, and Asp274.

This sequence belongs to the peptidase C58 family. As to quaternary structure, interacts with human ARHA.

The protein resides in the secreted. Its function is as follows. Cysteine protease, which is translocated into infected cells and plays a central role in pathogenesis by cleaving the C-terminus end of the human small GTPase RhoA/ARHA, a regulator of cytoskeleton. Once cleaved, ARHA loses its lipid modification, and is released from the cell membrane, leading to the subsequent disruption of actin cytoskeleton of the host cell. This Yersinia enterocolitica protein is Cysteine protease yopT1 (yopT1).